The following is a 393-amino-acid chain: O-phospho-L-seryl-tRNA:Cys-tRNA synthase 1 (393 aa).

Pyridoxal 5'-phosphate-binding positions include 85–86 (AR), asparagine 190, and 213–215 (SGH). Lysine 216 is subject to N6-(pyridoxal phosphate)lysine.

It belongs to the SepCysS family. As to quaternary structure, homodimer. Interacts with SepRS. It depends on pyridoxal 5'-phosphate as a cofactor.

The catalysed reaction is O-phospho-L-seryl-tRNA(Cys) + hydrogen sulfide + H(+) = L-cysteinyl-tRNA(Cys) + phosphate. In terms of biological role, converts O-phospho-L-seryl-tRNA(Cys) (Sep-tRNA(Cys)) to L-cysteinyl-tRNA(Cys) (Cys-tRNA(Cys)). In Methanospirillum hungatei JF-1 (strain ATCC 27890 / DSM 864 / NBRC 100397 / JF-1), this protein is O-phospho-L-seryl-tRNA:Cys-tRNA synthase 1.